Here is an 88-residue protein sequence, read N- to C-terminus: RNA-binding protein Hfq (88 aa).

The Sm domain occupies 9-68 (DPYLNVLRKERVPVSIYLVNGIKLQGQVESFDQFVVLLKNTVSQMVYKHAISTVVPSRAV).

Belongs to the Hfq family. As to quaternary structure, homohexamer.

RNA chaperone that binds small regulatory RNA (sRNAs) and mRNAs to facilitate mRNA translational regulation in response to envelope stress, environmental stress and changes in metabolite concentrations. Also binds with high specificity to tRNAs. This Cellvibrio japonicus (strain Ueda107) (Pseudomonas fluorescens subsp. cellulosa) protein is RNA-binding protein Hfq.